Here is a 138-residue protein sequence, read N- to C-terminus: Large ribosomal subunit protein uL14m (138 aa).

It belongs to the universal ribosomal protein uL14 family. In terms of assembly, component of the mitochondrial large ribosomal subunit (mt-LSU). Mature yeast 74S mitochondrial ribosomes consist of a small (37S) and a large (54S) subunit. The 37S small subunit contains a 15S ribosomal RNA (15S mt-rRNA) and 34 different proteins. The 54S large subunit contains a 21S rRNA (21S mt-rRNA) and 46 different proteins.

Its subcellular location is the mitochondrion. Its function is as follows. Component of the mitochondrial ribosome (mitoribosome), a dedicated translation machinery responsible for the synthesis of mitochondrial genome-encoded proteins, including at least some of the essential transmembrane subunits of the mitochondrial respiratory chain. The mitoribosomes are attached to the mitochondrial inner membrane and translation products are cotranslationally integrated into the membrane. This is Large ribosomal subunit protein uL14m (MRPL38) from Saccharomyces cerevisiae (strain ATCC 204508 / S288c) (Baker's yeast).